The chain runs to 314 residues: Ribonuclease Z (314 aa).

Positions 61, 63, 65, 66, 139, 211, and 269 each coordinate Zn(2+). The Proton acceptor role is filled by Asp65.

It belongs to the RNase Z family. In terms of assembly, homodimer. It depends on Zn(2+) as a cofactor.

The catalysed reaction is Endonucleolytic cleavage of RNA, removing extra 3' nucleotides from tRNA precursor, generating 3' termini of tRNAs. A 3'-hydroxy group is left at the tRNA terminus and a 5'-phosphoryl group is left at the trailer molecule.. Its function is as follows. Zinc phosphodiesterase, which displays some tRNA 3'-processing endonuclease activity. Probably involved in tRNA maturation, by removing a 3'-trailer from precursor tRNA. This Gemmatimonas aurantiaca (strain DSM 14586 / JCM 11422 / NBRC 100505 / T-27) protein is Ribonuclease Z.